The sequence spans 375 residues: Putative serine protease 47 (375 aa).

Positions 1 to 23 (MGYCQGVSQVAVVLLMFPKEKEA) are cleaved as a signal peptide. Positions 41 to 60 (DGQLPMGPHSRASQVAPETT) are disordered. Residues 51-60 (RASQVAPETT) are compositionally biased toward polar residues. Positions 81-323 (IYGGRDAAAG…FINWIDEIMR (243 aa)) constitute a Peptidase S1 domain. Cysteines 106 and 122 form a disulfide. Residues H121 and D172 each act as charge relay system in the active site. N183 and N203 each carry an N-linked (GlcNAc...) asparagine glycan. Residues C206 and C281 are joined by a disulfide bond. Residue S275 is the Charge relay system of the active site.

This sequence belongs to the peptidase S1 family.

Its subcellular location is the secreted. This chain is Putative serine protease 47 (PRSS47P), found in Homo sapiens (Human).